The chain runs to 119 residues: Ribonuclease P protein component (119 aa).

The protein belongs to the RnpA family. In terms of assembly, consists of a catalytic RNA component (M1 or rnpB) and a protein subunit.

The enzyme catalyses Endonucleolytic cleavage of RNA, removing 5'-extranucleotides from tRNA precursor.. Functionally, RNaseP catalyzes the removal of the 5'-leader sequence from pre-tRNA to produce the mature 5'-terminus. It can also cleave other RNA substrates such as 4.5S RNA. The protein component plays an auxiliary but essential role in vivo by binding to the 5'-leader sequence and broadening the substrate specificity of the ribozyme. This chain is Ribonuclease P protein component, found in Aromatoleum aromaticum (strain DSM 19018 / LMG 30748 / EbN1) (Azoarcus sp. (strain EbN1)).